A 744-amino-acid chain; its full sequence is ATP-dependent zinc metalloprotease FtsH (744 aa).

At 1–16 (MQDQNNSNTPKKKKLS) the chain is on the cytoplasmic side. The helical transmembrane segment at 17–37 (FWGIIGIVASILVLLVIAYII) threads the bilayer. Over 38–177 (YYYVSQTTVL…ESIWSTVLRY (140 aa)) the chain is Extracellular. The chain crosses the membrane as a helical span at residues 178-198 (GTNIIFLLLFAASFIFMFMSF). Residues 199-744 (RSQRGTGGLL…EEKSKDEKNN (546 aa)) lie on the Cytoplasmic side of the membrane. 264-271 (GPPGTGKT) provides a ligand contact to ATP. His-486 contributes to the Zn(2+) binding site. Residue Glu-487 is part of the active site. Zn(2+) contacts are provided by His-490 and Asp-564. The disordered stretch occupies residues 722–744 (IEANKSSSKSTVNEEKSKDEKNN). Positions 733-744 (VNEEKSKDEKNN) are enriched in basic and acidic residues.

It in the central section; belongs to the AAA ATPase family. The protein in the C-terminal section; belongs to the peptidase M41 family. As to quaternary structure, homohexamer. Requires Zn(2+) as cofactor.

It localises to the cell membrane. Functionally, acts as a processive, ATP-dependent zinc metallopeptidase for both cytoplasmic and membrane proteins. Plays a role in the quality control of integral membrane proteins. The chain is ATP-dependent zinc metalloprotease FtsH from Metamycoplasma arthritidis (strain 158L3-1) (Mycoplasma arthritidis).